The sequence spans 108 residues: Nucleoid-associated protein BPP1222 (108 aa).

Residues 86 to 108 (TSQEKMASVTAGMPLPPGMKLPF) form a disordered region. The segment covering 99-108 (PLPPGMKLPF) has biased composition (pro residues).

Belongs to the YbaB/EbfC family. In terms of assembly, homodimer.

The protein localises to the cytoplasm. It is found in the nucleoid. Its function is as follows. Binds to DNA and alters its conformation. May be involved in regulation of gene expression, nucleoid organization and DNA protection. The chain is Nucleoid-associated protein BPP1222 from Bordetella parapertussis (strain 12822 / ATCC BAA-587 / NCTC 13253).